A 359-amino-acid chain; its full sequence is Probable RNA methyltransferase RPD_2859 (359 aa).

The Proton acceptor role is filled by Glu99. The Radical SAM core domain occupies Arg105 to Arg330. A disulfide bridge links Cys112 with Cys336. The [4Fe-4S] cluster site is built by Cys119, Cys123, and Cys126. S-adenosyl-L-methionine-binding positions include Gly162–Glu163, Ser194, Ser217–His219, and Asn293. Cys336 serves as the catalytic S-methylcysteine intermediate.

Belongs to the radical SAM superfamily. RlmN family. It depends on [4Fe-4S] cluster as a cofactor.

It is found in the cytoplasm. The sequence is that of Probable RNA methyltransferase RPD_2859 from Rhodopseudomonas palustris (strain BisB5).